Consider the following 476-residue polypeptide: Cysteine--tRNA ligase (476 aa).

Residue C29 coordinates Zn(2+). The 'HIGH' region signature appears at 31–41 (PTVYDYTHIGH). Zn(2+) contacts are provided by C209, H234, and E238. Positions 266–270 (KMSKS) match the 'KMSKS' region motif. An ATP-binding site is contributed by K269.

The protein belongs to the class-I aminoacyl-tRNA synthetase family. Requires Zn(2+) as cofactor.

The protein localises to the cytoplasm. It catalyses the reaction tRNA(Cys) + L-cysteine + ATP = L-cysteinyl-tRNA(Cys) + AMP + diphosphate. This is Cysteine--tRNA ligase from Thermococcus kodakarensis (strain ATCC BAA-918 / JCM 12380 / KOD1) (Pyrococcus kodakaraensis (strain KOD1)).